We begin with the raw amino-acid sequence, 51 residues long: Large ribosomal subunit protein eL39 (51 aa).

Belongs to the eukaryotic ribosomal protein eL39 family. In terms of assembly, part of the 50S ribosomal subunit.

The polypeptide is Large ribosomal subunit protein eL39 (Pyrococcus furiosus (strain ATCC 43587 / DSM 3638 / JCM 8422 / Vc1)).